Here is a 131-residue protein sequence, read N- to C-terminus: Protein TIFY 5A (131 aa).

Positions 9-13 (LELRL) match the EAR motif. Disordered stretches follow at residues 14–44 (FPTS…EESQ) and 74–131 (REMK…HSRR). A compositionally biased stretch (low complexity) spans 16–34 (TSYDSDSSDTTSVVESTSS). One can recognise a Tify domain in the interval 39-74 (PNEESQRITIFYNGKMCFSSDVTHLQARSIISIASR). Polar residues predominate over residues 79–100 (KSSSNGSDPPNKSTSFHHNQLP). Positions 105–127 (SMKKSLQSFLQKRKIRIQATSPY) match the Jas motif. The short motif at 106–113 (MKKSLQSF) is the Nuclear localization signal element. Over residues 122–131 (QATSPYHSRR) the composition is skewed to polar residues.

It belongs to the TIFY/JAZ family. As to quaternary structure, interacts with TPL and weakly with COI1, but not with AFPH2/NINJA. Interacts with MYC2, MYB21, MYB24, TIFY10A/JAZ1, TIFY10B/JAZ2, TIFY6B/JAZ3, TIFY6A/JAZ4, TIFY11A/JAZ5, TIFY11B/JAZ6, TIFY7/JAZ9, TIFY9/JAZ10 and TIFY3B/JAZ12. Interacts with RHD6 and RSL1. (Microbial infection) Interacts with the pathogenic Pseudomonas syringae HopZ1a protein. In terms of processing, (Microbial infection) Acetylated by Pseudomonas syringae HopZ1a. Ubiquitinated.

Its subcellular location is the nucleus. Repressor of jasmonate responses. Unable to associate strongly with COI1 in the presence of jasmonoyl-isoleucine (JA-Ile) and is therefore more resistant to JA-mediated-degradation than other TIFY/JAZ proteins. Repress gene expression through direct recruitment of the corepressor TOPLESS to cognate transcription factors. Interacts with and suppresses RHD6 and RSL1 transcription factor activities to negatively regulate jasmonate-stimulated root hair development. This chain is Protein TIFY 5A, found in Arabidopsis thaliana (Mouse-ear cress).